The chain runs to 594 residues: DEAD-box ATP-dependent RNA helicase 25 (594 aa).

2 disordered regions span residues 56 to 80 (RSGG…EEGL) and 92 to 121 (GVRE…VDGS). A Q motif motif is present at residues 126-154 (TRFDQCTISPLSLKAVKDAGYERMTQVQE). In terms of domain architecture, Helicase ATP-binding spans 157–340 (LPVILQGKDV…HIAMKKNYKF (184 aa)). Residue 170-177 (AKTGTGKT) participates in ATP binding. The short motif at 288-291 (DEAD) is the DEAD box element. The 151-residue stretch at 370-520 (ILYDVLKKHV…SVDSSTQTIV (151 aa)) folds into the Helicase C-terminal domain.

Belongs to the DEAD box helicase family.

The catalysed reaction is ATP + H2O = ADP + phosphate + H(+). In Oryza sativa subsp. japonica (Rice), this protein is DEAD-box ATP-dependent RNA helicase 25.